We begin with the raw amino-acid sequence, 43 residues long: Potassium channel toxin gamma-KTx 4.8 (43 aa).

Disulfide bonds link cysteine 5–cysteine 23, cysteine 11–cysteine 34, cysteine 20–cysteine 39, and cysteine 24–cysteine 41.

It belongs to the ergtoxin family. Gamma-KTx 4 subfamily. Expressed by the venom gland.

The protein localises to the secreted. Its function is as follows. Reversibly blocks Kv11/ERG potassium channels. In Centruroides elegans (Bark scorpion), this protein is Potassium channel toxin gamma-KTx 4.8.